The following is a 264-amino-acid chain: 3-methyl-2-oxobutanoate hydroxymethyltransferase (264 aa).

D45 and D84 together coordinate Mg(2+). 3-methyl-2-oxobutanoate is bound by residues 45–46 (DS), D84, and K112. E114 lines the Mg(2+) pocket. The active-site Proton acceptor is the E181.

This sequence belongs to the PanB family. As to quaternary structure, homodecamer; pentamer of dimers. It depends on Mg(2+) as a cofactor.

It localises to the cytoplasm. The enzyme catalyses 3-methyl-2-oxobutanoate + (6R)-5,10-methylene-5,6,7,8-tetrahydrofolate + H2O = 2-dehydropantoate + (6S)-5,6,7,8-tetrahydrofolate. Its pathway is cofactor biosynthesis; (R)-pantothenate biosynthesis; (R)-pantoate from 3-methyl-2-oxobutanoate: step 1/2. In terms of biological role, catalyzes the reversible reaction in which hydroxymethyl group from 5,10-methylenetetrahydrofolate is transferred onto alpha-ketoisovalerate to form ketopantoate. In Shewanella denitrificans (strain OS217 / ATCC BAA-1090 / DSM 15013), this protein is 3-methyl-2-oxobutanoate hydroxymethyltransferase.